An 857-amino-acid polypeptide reads, in one-letter code: MNSRYSPADLEQRWQTTWRSEGLDVTPEPEDGKGFYALSMFPYPSGTLHMGHVRNYVITDVIARVQRMRGHSVLHPMGWDAFGLPAENAAIERNVDPGDWTDRNIDQMRSQLDRLGLSIDWDREQATCHSDYYRWTQWLFLELFDGGLAYRKNATVNWDPVDQTVLANEQVDADGRSWRSGALVEQRQLNQWFLRITQYAEALLNDLDQLSGWPERVRTMQANWIGRSEGAEIQFKVSSDSDTTITVFTTRPDTLAGASCVVLAPDHPLVNSLTSPDQQDVVQAFQAEVARLSALERTSDDAPKRGVFTGATVLNPLNGRALPVWIADYVLVDYGTGAVMGVPAHDQRDRRFAQSYGLAVQQVIEAEGAAAAIAAGEAWTDPGVLIHSGDFDGLNSIEAKERITRHGEQQGWAVAKVTYRLRDWLISRQRYWGCPIPIIHCPSCGAVPVPREDLPVVLPRGIDLSGKGGSPLEQQQDWVNVPCPSCGEPAKRETDTMDTFMCSSWYFLRFADPHNTEQPFSREAVNRWLPVQQYVGGIEHAILHLLYSRFFTKALKDRGLIDVAEPFDRLLTQGMVQGTTYRNPSTGKYVASADVSDPETPTDPTSGEPLEVLFEKMSKSKYNGVDPAAVIDRYGADTARMFILFKAPPEKDLEWDDSDVEGQFRFLQRIWRLVESADSRIDSLEPEERPEPLADTDAKVRRAIHIAIDAVSEDLQDEIQLNTAISELMKLTNAITSVGVAELSTSVLKEALSTLLRLLAPFAPHLAEELWHQLGGTSSVHRAGWPELDPSALVQDSVDLVIQIKGKVRGTIQVPAAADKEQLEALALASEIAAKWLEGHPPRRVIVVPGKLVNLVP.

A 'HIGH' region motif is present at residues 42–52 (PYPSGTLHMGH). The 'KMSKS' region motif lies at 616–620 (KMSKS). Position 619 (Lys619) interacts with ATP.

Belongs to the class-I aminoacyl-tRNA synthetase family.

Its subcellular location is the cytoplasm. The enzyme catalyses tRNA(Leu) + L-leucine + ATP = L-leucyl-tRNA(Leu) + AMP + diphosphate. This is Leucine--tRNA ligase from Parasynechococcus marenigrum (strain WH8102).